A 240-amino-acid polypeptide reads, in one-letter code: Probable transcriptional regulatory protein BLi02909/BL01150 (240 aa).

Residues Met-1–Lys-14 are compositionally biased toward basic residues. Residues Met-1–Arg-21 are disordered.

Belongs to the TACO1 family.

The protein localises to the cytoplasm. This Bacillus licheniformis (strain ATCC 14580 / DSM 13 / JCM 2505 / CCUG 7422 / NBRC 12200 / NCIMB 9375 / NCTC 10341 / NRRL NRS-1264 / Gibson 46) protein is Probable transcriptional regulatory protein BLi02909/BL01150.